The following is a 91-amino-acid chain: uncharacterized protein (91 aa).

2 helical membrane passes run 10–30 (VLFT…AGGI) and 46–66 (LLVA…QALS). The tract at residues 68–91 (MRRQDGARGTARAGRNSARRRMPS) is disordered.

The protein localises to the cell membrane. This is an uncharacterized protein from Sinorhizobium fredii (strain NBRC 101917 / NGR234).